We begin with the raw amino-acid sequence, 105 residues long: Nucleoid-associated protein ABO_1774 (105 aa).

Residues 85-105 (QQQDSMQNMAGGFPFPPGFKP) form a disordered region.

The protein belongs to the YbaB/EbfC family. In terms of assembly, homodimer.

Its subcellular location is the cytoplasm. The protein resides in the nucleoid. Functionally, binds to DNA and alters its conformation. May be involved in regulation of gene expression, nucleoid organization and DNA protection. The polypeptide is Nucleoid-associated protein ABO_1774 (Alcanivorax borkumensis (strain ATCC 700651 / DSM 11573 / NCIMB 13689 / SK2)).